Consider the following 190-residue polypeptide: Elongation factor P (190 aa).

Belongs to the elongation factor P family.

The protein localises to the cytoplasm. It functions in the pathway protein biosynthesis; polypeptide chain elongation. Functionally, involved in peptide bond synthesis. Stimulates efficient translation and peptide-bond synthesis on native or reconstituted 70S ribosomes in vitro. Probably functions indirectly by altering the affinity of the ribosome for aminoacyl-tRNA, thus increasing their reactivity as acceptors for peptidyl transferase. The sequence is that of Elongation factor P from Hyphomonas neptunium (strain ATCC 15444).